The primary structure comprises 83 residues: BmKBT-like peptide (83 aa).

The first 19 residues, 1–19 (MKAALLLVISTLMLIGVLT), serve as a signal peptide directing secretion. An LCN-type CS-alpha/beta domain is found at 21–81 (KSGYPIQHDG…TWSRETNKCR (61 aa)). 4 disulfide bridges follow: C31/C80, C35/C54, C41/C61, and C45/C63. K83 is a propeptide (removed by a carboxypeptidase).

It belongs to the long (4 C-C) scorpion toxin superfamily. Sodium channel inhibitor family. Beta subfamily. In terms of tissue distribution, expressed by the venom gland.

The protein localises to the secreted. Functionally, sodium channel inhibitor. Possesses potent toxicity in mice but induces only paralysis in cotton bollworm. This Olivierus martensii (Manchurian scorpion) protein is BmKBT-like peptide.